Here is a 444-residue protein sequence, read N- to C-terminus: Transcriptional coactivator nsrH (444 aa).

An HTH iclR-type domain is found at 74–144 (ASQVSEILAC…ERDHVAHTPL (71 aa)). The segment at residues 104–123 (IKDIADLTNVPESRLRRIIR) is a DNA-binding region (H-T-H motif).

It localises to the nucleus. Transcriptional coactivator; part of the gene cluster that mediates the biosynthesis of the tetrahydroxanthone dimer neosartorin, which exhibits antibacterial activity. This chain is Transcriptional coactivator nsrH, found in Aspergillus novofumigatus (strain IBT 16806).